The sequence spans 287 residues: N-methyltransferase verN (287 aa).

Belongs to the methyltransferase superfamily. LaeA methyltransferase family.

It functions in the pathway mycotoxin biosynthesis. N-methyltransferase; part of the gene cluster that mediates the biosynthesis of 11'-deoxyverticillin A, one of the dimeric epipolythiodioxopiperazines (ETPs) from the verticillin family that act as mycotoxins. 11'-deoxyverticillin A is required for normal conidiation. The nonribosomal peptide synthetase verP is speculated to be responsible for condensation of amino acids to form the carbon skeleton of verticillin, whereas the cluster-specific tailoring enzymes are involved in further modifications leading to the production of 11'-deoxyverticillin A. This chain is N-methyltransferase verN, found in Clonostachys rogersoniana.